The following is a 1010-amino-acid chain: Lethal(2) giant larvae protein homolog SRO77 (1010 aa).

14 WD repeats span residues 47–80 (TVTT…VVFT), 87–122 (IKHM…TTVF), 127–163 (ITCI…KLKI), 182–215 (SIQW…KQHF), 240–275 (VIQS…IHAR), 299–364 (AIFK…QKLF), 372–407 (LINF…ETLI), 431–504 (VTTC…FEVN), 518–595 (KNIS…STVI), 602–637 (VSAI…FNEN), 649–700 (VSTV…DATK), 709–763 (GINS…THAL), 768–815 (IATS…KNLR), and 829–852 (SILE…SVLN). The disordered stretch occupies residues 932-958 (SNAARKLPPGTEDHRYARPVRSSGRSN).

This sequence belongs to the WD repeat L(2)GL family. As to quaternary structure, interacts with SEC9.

Acts as an allosteric regulator of polarized exocytosis by promoting the targeted fusion of vesicles with the plasma membrane. Involved in maintenance of ion homeostasis in cells exposed to NaCl stress. May be involved in the targeting of the myosin proteins to their intrinsic pathways. Multicopy suppressor of RHO3. May also participate in the maintenance of cell polarity and bud growth. This Saccharomyces cerevisiae (strain ATCC 204508 / S288c) (Baker's yeast) protein is Lethal(2) giant larvae protein homolog SRO77 (SRO77).